We begin with the raw amino-acid sequence, 396 residues long: Ornithine aminotransferase (396 aa).

Lys-255 is modified (N6-(pyridoxal phosphate)lysine).

Belongs to the class-III pyridoxal-phosphate-dependent aminotransferase family. OAT subfamily. It depends on pyridoxal 5'-phosphate as a cofactor.

It is found in the cytoplasm. The catalysed reaction is a 2-oxocarboxylate + L-ornithine = L-glutamate 5-semialdehyde + an L-alpha-amino acid. Its pathway is amino-acid biosynthesis; L-proline biosynthesis; L-glutamate 5-semialdehyde from L-ornithine: step 1/1. Catalyzes the interconversion of ornithine to glutamate semialdehyde. The polypeptide is Ornithine aminotransferase (Staphylococcus carnosus (strain TM300)).